A 148-amino-acid chain; its full sequence is Deoxyuridine 5'-triphosphate nucleotidohydrolase (148 aa).

Residues 67 to 69 (RSG), N80, 84 to 86 (LID), and M94 contribute to the substrate site.

Belongs to the dUTPase family. The cofactor is Mg(2+).

The enzyme catalyses dUTP + H2O = dUMP + diphosphate + H(+). It participates in pyrimidine metabolism; dUMP biosynthesis; dUMP from dCTP (dUTP route): step 2/2. This enzyme is involved in nucleotide metabolism: it produces dUMP, the immediate precursor of thymidine nucleotides and it decreases the intracellular concentration of dUTP so that uracil cannot be incorporated into DNA. This Paraburkholderia phymatum (strain DSM 17167 / CIP 108236 / LMG 21445 / STM815) (Burkholderia phymatum) protein is Deoxyuridine 5'-triphosphate nucleotidohydrolase.